We begin with the raw amino-acid sequence, 685 residues long: A-type ATP synthase subunit I (685 aa).

The next 7 membrane-spanning stretches (helical) occupy residues 172 to 192 (VGGL…VAVP), 348 to 368 (EIVP…LMFP), 394 to 414 (VIAV…EVFG), 464 to 484 (LFMG…NGVI), 538 to 558 (LVLA…PIIY), 604 to 624 (MFVI…ADVV), and 626 to 646 (ALLY…LAFA).

It belongs to the V-ATPase 116 kDa subunit family. As to quaternary structure, has multiple subunits with at least A(3), B(3), C, D, E, F, H, I and proteolipid K(x).

It localises to the cell membrane. Functionally, component of the A-type ATP synthase that produces ATP from ADP in the presence of a proton gradient across the membrane. In Aeropyrum pernix (strain ATCC 700893 / DSM 11879 / JCM 9820 / NBRC 100138 / K1), this protein is A-type ATP synthase subunit I.